Consider the following 401-residue polypeptide: MHIKTLTVSQLNRYVKNTLDADFILNNASVKGEISNLKIHSSGHIYFSLKDGGSKINCVMFKSYAYNLKFAPENGMDVVALGNVSVYEKEGSYQLYVKDMKREGIGDLYVAFEKLKEKLKEEELFDDVHKKEIPKFSKKVGVITSPTGAALKDIINVTKRRNKGIELLIYPALVQGTDASRTLIEGIKILNKVEDVDIIILARGGGSIEELWAFNNEELAYAVYNSKKPIITGVGHETDFTIVDFVSDRRAPTPSAAAEIAVFDREVLINEILNYKYNIKNYMENIIKEKRNYLNLYKQKIEANSPTNIIVNEYKNIDNLKELLNMKIEGKLNKEKNNLSRLSSLLEAHNPLNVLKKGYTLIEDEGNNLITEKEALKKLNKINIIFKDGRAKLSIEYIEEF.

The protein belongs to the XseA family. Heterooligomer composed of large and small subunits.

Its subcellular location is the cytoplasm. The catalysed reaction is Exonucleolytic cleavage in either 5'- to 3'- or 3'- to 5'-direction to yield nucleoside 5'-phosphates.. In terms of biological role, bidirectionally degrades single-stranded DNA into large acid-insoluble oligonucleotides, which are then degraded further into small acid-soluble oligonucleotides. The sequence is that of Exodeoxyribonuclease 7 large subunit from Clostridium botulinum (strain Langeland / NCTC 10281 / Type F).